Consider the following 317-residue polypeptide: Protein phosphatase 1 regulatory subunit 3C-B (317 aa).

The region spanning 150 to 258 (RNRLKKNLVC…NNDGKNYKLV (109 aa)) is the CBM21 domain.

As to quaternary structure, interacts with PPP1CC catalytic subunit of PP1 and associates with glycogen. Forms complexes with glycogen phosphorylase, glycogen synthase and phosphorylase kinase which is necessary for its regulation of PP1 activity.

Its function is as follows. Acts as a glycogen-targeting subunit for PP1 and regulates its activity. Activates glycogen synthase, reduces glycogen phosphorylase activity and limits glycogen breakdown. The chain is Protein phosphatase 1 regulatory subunit 3C-B (ppp1r3cb) from Danio rerio (Zebrafish).